Consider the following 273-residue polypeptide: MEVDDGSRATPPLDAVAAAFKSQVMELQDLVLARSMFPATALPDLANVDALVTAMESQVETISRRLQEELDAIPKAKKLVQRSLKEEEKLQHMLANLPSGMRKNDFANQHEQSSSRMLPHFNSSFTEANECELKIKDEPVAAPRKGRAPAPRWYISTEELDSLSSYMRGRLTLEKVNIAINEVASYADANAHLVTCPKKKLSEDTWEKALELRDIAASGAVKGNHFFLEADIKGPGLKLDNTGKAILTVLRHLGRFHEVRIGHHRVFILSKQA.

A coiled-coil region spans residues 77–97 (KKLVQRSLKEEEKLQHMLANL).

This sequence belongs to the SKA1 family.

This Zea mays (Maize) protein is SKA complex subunit 1 homolog.